Consider the following 523-residue polypeptide: 2-isopropylmalate synthase (523 aa).

In terms of domain architecture, Pyruvate carboxyltransferase spans 5–267; that stretch reads VIIFDTTLRD…HTAINHQEIW (263 aa). Mn(2+) contacts are provided by Asp-14, His-202, His-204, and Asn-238. Residues 392–523 form a regulatory domain region; sequence RLDYFSVQSG…QHNENNKETV (132 aa).

Belongs to the alpha-IPM synthase/homocitrate synthase family. LeuA type 1 subfamily. In terms of assembly, homodimer. Mn(2+) serves as cofactor.

It is found in the cytoplasm. The catalysed reaction is 3-methyl-2-oxobutanoate + acetyl-CoA + H2O = (2S)-2-isopropylmalate + CoA + H(+). It functions in the pathway amino-acid biosynthesis; L-leucine biosynthesis; L-leucine from 3-methyl-2-oxobutanoate: step 1/4. In terms of biological role, catalyzes the condensation of the acetyl group of acetyl-CoA with 3-methyl-2-oxobutanoate (2-ketoisovalerate) to form 3-carboxy-3-hydroxy-4-methylpentanoate (2-isopropylmalate). This is 2-isopropylmalate synthase from Escherichia coli O127:H6 (strain E2348/69 / EPEC).